The primary structure comprises 261 residues: Cytochrome c oxidase subunit 3 (261 aa).

Topologically, residues 1–15 (MVHQSHAYHMLKPSP) are mitochondrial matrix. The chain crosses the membrane as a helical span at residues 16 to 34 (WPLTGALSALLMTSGLAMW). The Mitochondrial intermembrane segment spans residues 35–40 (FHFHST). The chain crosses the membrane as a helical span at residues 41-66 (TLLLTGMLTNALTMYQWWRDVVREST). At 67–72 (YQGHHT) the chain is on the mitochondrial matrix side. Residues 73 to 105 (LPVQKGLRYGMILFITSEVFFFAGFFWAFYHSS) traverse the membrane as a helical segment. The Mitochondrial intermembrane segment spans residues 106–128 (LAPTPQLGGHWPPTGITPLNPLE). A helical membrane pass occupies residues 129 to 152 (VPLLNTAVLLASGVSITWAHHSLM). Residues 153-155 (ENN) are Mitochondrial matrix-facing. A helical transmembrane segment spans residues 156–183 (RTQMIQALLITILLGIYFTLLQASEYIE). The Mitochondrial intermembrane portion of the chain corresponds to 184-190 (APFTISD). Residues 191-223 (GIYGSTFFMTTGFHGLHVIIGSTFLTVCLSCQL) form a helical membrane-spanning segment. Over 224-232 (LFHFTSKHH) the chain is Mitochondrial matrix. The chain crosses the membrane as a helical span at residues 233–256 (FGFEAAAWYWHFVDVVWLFLYVSI). At 257-261 (YWWGS) the chain is on the mitochondrial intermembrane side.

It belongs to the cytochrome c oxidase subunit 3 family. As to quaternary structure, component of the cytochrome c oxidase (complex IV, CIV), a multisubunit enzyme composed of 14 subunits. The complex is composed of a catalytic core of 3 subunits MT-CO1, MT-CO2 and MT-CO3, encoded in the mitochondrial DNA, and 11 supernumerary subunits COX4I, COX5A, COX5B, COX6A, COX6B, COX6C, COX7A, COX7B, COX7C, COX8 and NDUFA4, which are encoded in the nuclear genome. The complex exists as a monomer or a dimer and forms supercomplexes (SCs) in the inner mitochondrial membrane with NADH-ubiquinone oxidoreductase (complex I, CI) and ubiquinol-cytochrome c oxidoreductase (cytochrome b-c1 complex, complex III, CIII), resulting in different assemblies (supercomplex SCI(1)III(2)IV(1) and megacomplex MCI(2)III(2)IV(2)).

It is found in the mitochondrion inner membrane. It carries out the reaction 4 Fe(II)-[cytochrome c] + O2 + 8 H(+)(in) = 4 Fe(III)-[cytochrome c] + 2 H2O + 4 H(+)(out). Component of the cytochrome c oxidase, the last enzyme in the mitochondrial electron transport chain which drives oxidative phosphorylation. The respiratory chain contains 3 multisubunit complexes succinate dehydrogenase (complex II, CII), ubiquinol-cytochrome c oxidoreductase (cytochrome b-c1 complex, complex III, CIII) and cytochrome c oxidase (complex IV, CIV), that cooperate to transfer electrons derived from NADH and succinate to molecular oxygen, creating an electrochemical gradient over the inner membrane that drives transmembrane transport and the ATP synthase. Cytochrome c oxidase is the component of the respiratory chain that catalyzes the reduction of oxygen to water. Electrons originating from reduced cytochrome c in the intermembrane space (IMS) are transferred via the dinuclear copper A center (CU(A)) of subunit 2 and heme A of subunit 1 to the active site in subunit 1, a binuclear center (BNC) formed by heme A3 and copper B (CU(B)). The BNC reduces molecular oxygen to 2 water molecules using 4 electrons from cytochrome c in the IMS and 4 protons from the mitochondrial matrix. The polypeptide is Cytochrome c oxidase subunit 3 (MT-CO3) (Pongo pygmaeus (Bornean orangutan)).